The primary structure comprises 286 residues: F-box/SPRY domain-containing protein 1 (286 aa).

Ala-2 is modified (N-acetylalanine). In terms of domain architecture, F-box spans 33 to 82 (SGVGGRLPSRVLELVFSYLELSELRSCALVCKHWYRCLHGDENSEVWRSL). The 193-residue stretch at 92-284 (LRTDILCNLP…VTLVYLGKPL (193 aa)) folds into the B30.2/SPRY domain.

The protein belongs to the FBXO45/Fsn family. As to quaternary structure, forms a complex with MYCBP2 and SKP1. Interacts with HEY1; leading to FBXO45 nuclear translocation. Interacts (via SPRY domain) with CDH2. As to expression, expressed speciffically in the central nervous system, including cerebellum, medulla oblongata, olfactory bulb, hippocampus, cortex and brain stem.

Its subcellular location is the secreted. It localises to the postsynaptic cell membrane. The protein localises to the presynaptic cell membrane. It is found in the nucleus. The protein operates within protein modification; protein ubiquitination. Functionally, component of E3 ubiquitin ligase complex consisting of FBXO45, MYCBP2 and SKP1. Functions in substrate recognition but plays also an important role in assembly of the complex. Required for normal neuromuscular synaptogenesis, axon pathfinding and neuronal migration. Regulates neuron migration during brain development through interaction with N-cadherin/CDH2 after secretion via a non-classical mechanism. Plays a role in the regulation of neurotransmission at mature neurons. May control synaptic activity by controlling UNC13A via ubiquitin dependent pathway. Specifically recognizes TP73, promoting its ubiquitination and degradation. Polyubiquitinates NMNAT2, an adenylyltransferase that acts as an axon maintenance factor, and regulates its stability and degradation by the proteasome. Acts also by ubiquitinating FBXW7 during prolonged mitotic arrest and promotes FBXW7 proteasomal degradation. Induces subsequently an increase in mitotic slippage and prevents mitotic cell death. In response to influenza infection, mediates interferon-lambda receptor IFNLR1 polyubiquitination and degradation through the ubiquitin-proteasome system by docking with its intracellular receptor domain. This is F-box/SPRY domain-containing protein 1 from Mus musculus (Mouse).